A 316-amino-acid polypeptide reads, in one-letter code: Olfactory receptor 2K2 (316 aa).

Residues 1-20 (MQGENFTIWSIFFLEGFSQY) lie on the Extracellular side of the membrane. N-linked (GlcNAc...) asparagine glycosylation is present at Asn5. Residues 21-41 (PGLEVVLFVFSLVMYLTTLLG) form a helical membrane-spanning segment. Residues 42-65 (NSTLILITILDSRLKTPMYLFLGN) are Cytoplasmic-facing. The helical transmembrane segment at 66 to 86 (LSFMDICYTSASVPTLLVNLL) threads the bilayer. The Extracellular segment spans residues 87–97 (SSQKTIIFSGC). Cys97 and Cys188 form a disulfide bridge. The helical transmembrane segment at 98–118 (AVQMYLSLAMGSTECVLLAVM) threads the bilayer. Over 119–143 (AYDRYVAICNPLRYSIIMNRCVCAR) the chain is Cytoplasmic. A helical transmembrane segment spans residues 144-164 (MATVSWVTGCLTALLETSFAL). The Extracellular portion of the chain corresponds to 165–199 (QIPLCGNLIDHFTCEILAVLKLACTSSLLMNTIML). The chain crosses the membrane as a helical span at residues 200–220 (VVSILLLPIPMLLVCISYIFI). Over 221–238 (LSTILRITSAEGRNKAFS) the chain is Cytoplasmic. A helical membrane pass occupies residues 239–259 (TCGAHLTVVILYYGAALSMYL). Residues 260 to 270 (KPSSSNAQKID) are Extracellular-facing. The chain crosses the membrane as a helical span at residues 271 to 291 (KIISLLYGVLTPMLNPIIYSL). Residues 292–316 (RNKEVKDAMKKLLGKITLHQTHEHL) lie on the Cytoplasmic side of the membrane.

Belongs to the G-protein coupled receptor 1 family.

The protein resides in the cell membrane. Odorant receptor. The polypeptide is Olfactory receptor 2K2 (OR2K2) (Homo sapiens (Human)).